The following is a 155-amino-acid chain: Catabolic 3-dehydroquinase (155 aa).

Tyr24 (proton acceptor) is an active-site residue. 3 residues coordinate substrate: Asn75, His81, and Asp88. The Proton donor role is filled by His101. Residues 102–103 (VS) and Arg112 contribute to the substrate site.

Belongs to the type-II 3-dehydroquinase family. As to quaternary structure, homododecamer. Adopts a ring-like structure, composed of an arrangement of two hexameric rings stacked on top of one another.

The catalysed reaction is 3-dehydroquinate = 3-dehydroshikimate + H2O. It participates in aromatic compound metabolism; 3,4-dihydroxybenzoate biosynthesis; 3,4-dihydroxybenzoate from 3-dehydroquinate: step 1/2. Its function is as follows. Is involved in the catabolism of quinate. Allows the utilization of quinate as carbon source via the beta-ketoadipate pathway. The protein is Catabolic 3-dehydroquinase of Penicillium rubens (strain ATCC 28089 / DSM 1075 / NRRL 1951 / Wisconsin 54-1255) (Penicillium chrysogenum).